A 607-amino-acid chain; its full sequence is Karyogamy meiotic segregation protein 1 (607 aa).

The tract at residues 83 to 135 (DDSFANQAEKPSMEQQNSKNSIKEDANEHSVNSAHSKSSSNASPESLNPSQMM) is disordered. Residues 111–132 (HSVNSAHSKSSSNASPESLNPS) show a composition bias toward low complexity.

Interacts with mcp1 and sad1.

The protein resides in the cytoplasm. It localises to the cytoskeleton. Its subcellular location is the microtubule organizing center. The protein localises to the spindle pole body. In terms of biological role, has a role in karyogamy, recombination and segregation during meiosis. Although it has been shown to associate with the spindle pole body it is unlikely to be involved in its formation or maintenance. The chain is Karyogamy meiotic segregation protein 1 (kms1) from Schizosaccharomyces pombe (strain 972 / ATCC 24843) (Fission yeast).